Reading from the N-terminus, the 153-residue chain is Endoribonuclease YbeY (153 aa).

His114, His118, and His124 together coordinate Zn(2+).

This sequence belongs to the endoribonuclease YbeY family. Requires Zn(2+) as cofactor.

It is found in the cytoplasm. Functionally, single strand-specific metallo-endoribonuclease involved in late-stage 70S ribosome quality control and in maturation of the 3' terminus of the 16S rRNA. This Shewanella baltica (strain OS223) protein is Endoribonuclease YbeY.